The primary structure comprises 145 residues: UPF0735 ACT domain-containing protein CKL_0858 (145 aa).

An ACT domain is found at 69–144 (TLGLTLAHKA…SVIKVNLAAV (76 aa)).

This sequence belongs to the UPF0735 family.

The sequence is that of UPF0735 ACT domain-containing protein CKL_0858 from Clostridium kluyveri (strain ATCC 8527 / DSM 555 / NBRC 12016 / NCIMB 10680 / K1).